The primary structure comprises 327 residues: Phenylalanine--tRNA ligase alpha subunit (327 aa).

Glutamate 252 is a Mg(2+) binding site.

It belongs to the class-II aminoacyl-tRNA synthetase family. Phe-tRNA synthetase alpha subunit type 1 subfamily. Tetramer of two alpha and two beta subunits. It depends on Mg(2+) as a cofactor.

Its subcellular location is the cytoplasm. The enzyme catalyses tRNA(Phe) + L-phenylalanine + ATP = L-phenylalanyl-tRNA(Phe) + AMP + diphosphate + H(+). The sequence is that of Phenylalanine--tRNA ligase alpha subunit from Shewanella sp. (strain MR-7).